We begin with the raw amino-acid sequence, 232 residues long: uncharacterized protein (232 aa).

Positions 1 to 32 (MTTSKIATAFKTATFALAAGAVALGLASPADA) are cleaved as a signal peptide.

This is an uncharacterized protein from Mycobacterium bovis (strain ATCC BAA-935 / AF2122/97).